We begin with the raw amino-acid sequence, 398 residues long: Cholinephosphotransferase 1 (398 aa).

Residue Ala2 is modified to N-acetylalanine. The Cytoplasmic segment spans residues 2-62 (AAGAGARPAP…LLQWIPLWIA (61 aa)). Residues 63–83 (PNTITLFGLAINLFTTLVLIF) form a helical membrane-spanning segment. Asn64 provides a ligand contact to CDP-choline. Residues 84-93 (YCPTVTEEAP) lie on the Lumenal side of the membrane. A helical transmembrane segment spans residues 94–118 (YWTYLLCALGLFIYQSLDAIDGKQA). Residues Asp111 and Asp114 each contribute to the Mg(2+) site. Arg119 contributes to the CDP-choline binding site. Topologically, residues 119 to 125 (RRTNSCS) are cytoplasmic. A helical transmembrane segment spans residues 126 to 150 (PLGELFDHGCDSLSTVFMAIGASIA). Residue Asp132 coordinates Mg(2+). Residue His133 is the Proton acceptor of the active site. Residue Asp136 participates in Mg(2+) binding. Residues 151–160 (VRLGTHPDWL) are Lumenal-facing. The helical transmembrane segment at 161-179 (FFCSFVGMFMFYCAHWQTY) threads the bilayer. The Cytoplasmic segment spans residues 180-190 (VSGVLRFGRVD). Residues 191–207 (VTEIQVALVIVFLLSTF) traverse the membrane as a helical segment. Residues 208-222 (GGAMMWDYTIPILEI) lie on the Lumenal side of the membrane. Residues 223 to 248 (KLKILPVLGVVGGLIFSCSNYFHVIL) form a helical membrane-spanning segment. Over 249–265 (HGGVGKNGSTIAGTSVL) the chain is Cytoplasmic. Residues 266–281 (SPGLHIGLIIILAIMI) form a helical membrane-spanning segment. The Lumenal portion of the chain corresponds to 282–293 (YKKSATNVFEKH). A helical membrane pass occupies residues 294 to 316 (PCLYTLMFGCVFAKVAQKLVIAH). Over 317–329 (MTKSELYLQDTVF) the chain is Cytoplasmic. A helical membrane pass occupies residues 330–339 (IGPGLLFLDQ). At 340 to 346 (YFNNFID) the chain is on the lumenal side. The chain crosses the membrane as a helical span at residues 347-376 (EYVVLWIAMVITSFDMMIYFSSLCLQISRH). The Cytoplasmic segment spans residues 377–398 (LHLSIFKTSYQQAPEQVHKHID).

The protein belongs to the CDP-alcohol phosphatidyltransferase class-I family. Mg(2+) is required as a cofactor. The cofactor is Mn(2+).

The protein resides in the golgi apparatus membrane. The catalysed reaction is CDP-choline + a 1,2-diacyl-sn-glycerol = a 1,2-diacyl-sn-glycero-3-phosphocholine + CMP + H(+). It carries out the reaction 1-octadecanoyl-2-(5Z,8Z,11Z,14Z-eicosatetraenoyl)-sn-glycerol + CDP-choline = 1-octadecanoyl-2-(5Z,8Z,11Z,14Z-eicosatetraenoyl)-sn-glycero-3-phosphocholine + CMP + H(+). It catalyses the reaction 1-hexadecanoyl-2-(9Z-octadecenoyl)-sn-glycerol + CDP-choline = 1-hexadecanoyl-2-(9Z-octadecenoyl)-sn-glycero-3-phosphocholine + CMP + H(+). The enzyme catalyses 1-hexadecanoyl-2-(4Z,7Z,10Z,13Z,16Z,19Z-docosahexaenoyl)-sn-glycerol + CDP-choline = 1-hexadecanoyl-2-(4Z,7Z,10Z,13Z,16Z,19Z-docosahexaenoyl)-sn-glycero-3-phosphocholine + CMP + H(+). The catalysed reaction is 1,2-dioctanoyl-sn-glycerol + CDP-choline = 1,2-dioctanoyl-sn-glycero-3-phosphocholine + CMP + H(+). It participates in phospholipid metabolism; phosphatidylcholine biosynthesis; phosphatidylcholine from phosphocholine: step 2/2. Catalyzes the final step of de novo phosphatidylcholine (PC) synthesis, i.e. the transfer of choline phosphate from CDP-choline to the free hydroxyl of a diacylglycerol (DAG), producing a PC. It thereby plays a central role in the formation and maintenance of vesicular membranes. The chain is Cholinephosphotransferase 1 from Rattus norvegicus (Rat).